The chain runs to 300 residues: Pleckstrin homology domain-containing family A member 3 (300 aa).

The region spanning 1-93 (MEGVLYKWTN…WLVALGSSKA (93 aa)) is the PH domain. The tract at residues 1–100 (MEGVLYKWTN…SKACLTDTRT (100 aa)) is interaction with SACM1L. Residues 97–300 (DTRTKKEKEI…SEDTLPSFSS (204 aa)) are interaction with VAPA and VAPB. Positions 197-300 (PVSPSPVQMM…SEDTLPSFSS (104 aa)) are disordered. Phosphoserine is present on residues S236 and S244. The segment covering 279 to 290 (EESRLMAKKQSE) has biased composition (basic and acidic residues).

In terms of assembly, interacts with GTP-bound ARF1. Interacts with SACM1L and VAPA and/or VAPB to form a ternary complex. As to expression, widely expressed.

The protein localises to the golgi apparatus. Its subcellular location is the trans-Golgi network membrane. Functionally, plays a role in regulation of vesicular cargo transport from the trans-Golgi network (TGN) to the plasma membrane. Regulates Golgi phosphatidylinositol 4-phosphate (PtdIns(4)P) levels and activates the PtdIns(4)P phosphatase activity of SACM1L when it binds PtdIns(4)P in 'trans' configuration. Binds preferentially to PtdIns(4)P. Negatively regulates APOB secretion from hepatocytes. The sequence is that of Pleckstrin homology domain-containing family A member 3 (PLEKHA3) from Homo sapiens (Human).